The chain runs to 366 residues: N-acetyl-6-hydroxytryptophan oxidase ivoB (366 aa).

The N-terminal stretch at 1–18 (MHLLSSLAALAAAITVAF) is a signal peptide. Residues Asn-28 and Asn-81 are each glycosylated (N-linked (GlcNAc...) asparagine). Residues His-87 and His-96 each coordinate Cu cation. Residues Asn-114 and Asn-121 are each glycosylated (N-linked (GlcNAc...) asparagine). His-291 is a Cu cation binding site. Asn-319 carries an N-linked (GlcNAc...) asparagine glycan.

It belongs to the tyrosinase family. Cu(2+) serves as cofactor.

The protein operates within pigment biosynthesis. Activity is inhibited by 2,3-dihydroxynaphthalene, phenylhydrazine, diethyl dithiocarbamate and 8-hydroxyquinolene. In terms of biological role, nonribosomal peptide synthetase; part of the pathway that mediates the biosynthesis of the gray-brown conidiophore pigment. The first step of the pathway is performed by the nonribosomal peptide synthetase ivoA that catalyzes ATP-dependent unidirectional stereoinversion of L-tryptophan to D-tryptophan with complete conversion. While the stereoinversion is catalyzed by the epimerization (E) domain of ivoA, the terminal condensation (C) domain stereoselectively hydrolyzes D-tryptophanyl-S-phosphopantetheine thioester and thus represents a non-canonical C domain function. D-tryptophan is acetylated, probably by an endogenous acetyltransferase. N-acetyltryptophan is further 6-hydroxylated into N-acetyl-6-hydroxytryptophan (AHT) by the cytochrome P450 monooxygenase ivoC. N-acetyl-6-hydroxytryptophan is substrate of the N-acetyl-6-hydroxytryptophan oxidase ivoB to produce the gray-brown conidiophore pigment. In Emericella nidulans (strain FGSC A4 / ATCC 38163 / CBS 112.46 / NRRL 194 / M139) (Aspergillus nidulans), this protein is N-acetyl-6-hydroxytryptophan oxidase ivoB.